The primary structure comprises 130 residues: Small ribosomal subunit protein uS8 (130 aa).

Belongs to the universal ribosomal protein uS8 family. In terms of assembly, part of the 30S ribosomal subunit.

Functionally, one of the primary rRNA binding proteins, it binds directly to 16S rRNA central domain where it helps coordinate assembly of the platform of the 30S subunit. The protein is Small ribosomal subunit protein uS8 of Methanoregula boonei (strain DSM 21154 / JCM 14090 / 6A8).